The chain runs to 177 residues: Nuclear export protein (177 aa).

2 short sequence motifs (nuclear export signal) span residues 91–100 (LWLPMKSLSL) and 117–127 (MKHQILTRLKL).

As to quaternary structure, binds M1 protein. May interact with human nucleoporins and exportin XPO1/CRM1.

It localises to the virion. Its subcellular location is the host nucleus. Its function is as follows. Mediates the nuclear export of encapsidated genomic RNAs (ribonucleoproteins, RNPs). Acts as an adapter between viral RNPs complexes and the nuclear export machinery of the cell. Possesses no intrinsic RNA-binding activity, but includes a C-terminal M1-binding domain. This domain is believed to allow recognition of RNPs to which the M1 protein is bound. Because the M1 protein is not available in large quantities until the later stages of infection, such an indirect recognition mechanism probably ensures that genomic RNPs are not exported from the nucleus before sufficient quantities of viral mRNA and progeny genomic RNA have been synthesized. Furthermore, the RNPs enters the cytoplasm only when they have associated with the M1 protein that is necessary to guide them to the plasma membrane. May down-regulate viral RNA synthesis when overproduced. The sequence is that of Nuclear export protein (NS) from Influenza C virus (strain C/Great lakes/1167/1954).